The primary structure comprises 220 residues: Fructose-6-phosphate aldolase (220 aa).

Lysine 85 functions as the Schiff-base intermediate with substrate in the catalytic mechanism.

Belongs to the transaldolase family. Type 3A subfamily. Homodecamer.

The protein localises to the cytoplasm. It carries out the reaction beta-D-fructose 6-phosphate = dihydroxyacetone + D-glyceraldehyde 3-phosphate. In terms of biological role, catalyzes the reversible formation of fructose 6-phosphate from dihydroxyacetone and D-glyceraldehyde 3-phosphate via an aldolization reaction. This chain is Fructose-6-phosphate aldolase, found in Salmonella arizonae (strain ATCC BAA-731 / CDC346-86 / RSK2980).